A 421-amino-acid polypeptide reads, in one-letter code: Telomeric repeat-binding factor 1 (421 aa).

A disordered region spans residues Met-1–Gly-30. Ala-2 is subject to N-acetylalanine. A TRFH mediates dimerization region spans residues Glu-49–Lys-255. Residue Lys-200 forms a Glycyl lysine isopeptide (Lys-Gly) (interchain with G-Cter in SUMO2) linkage. Ser-206 is subject to Phosphoserine; by ATM. An interaction with RLIM region spans residues Glu-252–Arg-365. A compositionally biased stretch (basic and acidic residues) spans Asn-253–Asp-266. A disordered region spans residues Asn-253 to Lys-366. Polar residues predominate over residues Val-284–Ser-310. Positions Lys-313–Arg-367 match the Nuclear localization signal motif. Residues Ser-362 to Leu-419 enclose the HTH myb-type domain. Residues Trp-390–Lys-415 constitute a DNA-binding region (H-T-H motif).

Homodimer; can contain both isoforms. Found in a complex with POT1; TINF2 and TNKS1. Interacts with ATM, TINF2, TNKS1, TNKS2, PINX1, NEK2 and MAPRE1. Component of the shelterin complex (telosome) composed of TERF1, TERF2, TINF2, TERF2IP ACD and POT1. Interacts with RLIM (via N-terminus). Interacts with FBXO4. Interaction with TINF2 protects against interaction with FBXO4 and subsequent polyubiquitination and proteasomal degradation. Interacts with GNL3L; this interaction promotes homodimerization. Interacts with TIN2. Interactions with GNL3L and TIN2 are mutually exclusive. Interacts with RTEL1. Interacts with CCDC79/TERB1. Post-translationally, phosphorylated preferentially on Ser-219 in an ATM-dependent manner in response to ionizing DNA damage. ADP-ribosylation by TNKS1 or TNKS2 diminishes its ability to bind to telomeric DNA. In terms of processing, ubiquitinated by RLIM/RNF12, leading to its degradation by the proteasome. Ubiquitinated by a SCF (SKP1-CUL1-F-box protein) ubiquitin-protein ligase complex, leading to its degradation by the proteasome.

The protein resides in the nucleus. It localises to the chromosome. It is found in the telomere. Its subcellular location is the cytoplasm. The protein localises to the cytoskeleton. The protein resides in the spindle. Binds the telomeric double-stranded 5'-TTAGGG-3' repeat and negatively regulates telomere length. Involved in the regulation of the mitotic spindle. Component of the shelterin complex (telosome) that is involved in the regulation of telomere length and protection. Shelterin associates with arrays of double-stranded 5'-TTAGGG-3' repeats added by telomerase and protects chromosome ends; without its protective activity, telomeres are no longer hidden from the DNA damage surveillance and chromosome ends are inappropriately processed by DNA repair pathways. The sequence is that of Telomeric repeat-binding factor 1 (Terf1) from Mus musculus (Mouse).